The sequence spans 417 residues: Putative F-box protein At4g21240 (417 aa).

Over residues 1–12 the composition is skewed to acidic residues; sequence MDRREEEEEETG. Positions 1–25 are disordered; the sequence is MDRREEEEEETGYGEKGTRNQSKED. The segment covering 16-25 has biased composition (basic and acidic residues); it reads KGTRNQSKED. The 47-residue stretch at 30–76 folds into the F-box domain; it reads GKIFELIPLDMIPDILLRLPAKSAVRFRIVSKLWLSITTRPYFIRSF.

The polypeptide is Putative F-box protein At4g21240 (Arabidopsis thaliana (Mouse-ear cress)).